The following is a 258-amino-acid chain: MIMLNIGPFSFHSRLLLGTGKFPDFDVQQKAIDVSEAEVLTFAVRRMDIFDAKQPNLLEKLDVKKYTLLPNTAGAKNAEEAVRIAKLAKASGLCDMIKVEVIGDDRTLLPDPVETLKASEMLLEEGFIVLPYTSDDVVLARKLQELGVHAIMPGASPIGSGLGIVNPLNLSFIIEQATVPVIVDAGIGSPADAAFAMELGADGVLLNTAVSGAKDPIKMAQAMKLSIEAGRLGFEAGRIARKRCATASSPLEGMSVVE.

The Schiff-base intermediate with DXP role is filled by lysine 98. 1-deoxy-D-xylulose 5-phosphate is bound by residues glycine 159, alanine 185–glycine 186, and asparagine 207–threonine 208.

It belongs to the ThiG family. In terms of assembly, homotetramer. Forms heterodimers with either ThiH or ThiS.

The protein resides in the cytoplasm. The enzyme catalyses [ThiS sulfur-carrier protein]-C-terminal-Gly-aminoethanethioate + 2-iminoacetate + 1-deoxy-D-xylulose 5-phosphate = [ThiS sulfur-carrier protein]-C-terminal Gly-Gly + 2-[(2R,5Z)-2-carboxy-4-methylthiazol-5(2H)-ylidene]ethyl phosphate + 2 H2O + H(+). The protein operates within cofactor biosynthesis; thiamine diphosphate biosynthesis. In terms of biological role, catalyzes the rearrangement of 1-deoxy-D-xylulose 5-phosphate (DXP) to produce the thiazole phosphate moiety of thiamine. Sulfur is provided by the thiocarboxylate moiety of the carrier protein ThiS. In vitro, sulfur can be provided by H(2)S. In Bacillus thuringiensis subsp. konkukian (strain 97-27), this protein is Thiazole synthase.